A 350-amino-acid chain; its full sequence is Probable poly-beta-1,6-N-acetyl-D-glucosamine export protein (350 aa).

10 consecutive transmembrane segments (helical) span residues 7–29 (ELVY…TQIT), 44–66 (FYIR…LLTT), 79–101 (TRVK…SESL), 116–138 (LLGQ…SYII), 145–167 (LFNS…YYFT), 187–204 (IIFG…MGYN), 211–233 (FLER…FIAL), 243–262 (SFSY…ILGI), 269–291 (MLFN…HPII), and 306–328 (TMVF…GMIL).

Belongs to the acyltransferase 3 family.

The protein resides in the cell membrane. In terms of biological role, presumably involved in the export of the biofilm adhesin polysaccharide poly-beta-1,6-N-acetyl-D-glucosamine (PNAG, also referred to as PIA) across the cell membrane. This Staphylococcus aureus (strain MRSA252) protein is Probable poly-beta-1,6-N-acetyl-D-glucosamine export protein (icaC).